Consider the following 530-residue polypeptide: Type II methyltransferase M.MjaII (530 aa).

Belongs to the N(4)/N(6)-methyltransferase family. N(4) subfamily.

It carries out the reaction a 2'-deoxycytidine in DNA + S-adenosyl-L-methionine = an N(4)-methyl-2'-deoxycytidine in DNA + S-adenosyl-L-homocysteine + H(+). Functionally, an alpha subtype methylase that recognizes the double-stranded sequence 5'-GGNCC-3', methylates C-5 on both strands, and protects the DNA from cleavage by the MjaII endonuclease. This is Type II methyltransferase M.MjaII (mjaIIM) from Methanocaldococcus jannaschii (strain ATCC 43067 / DSM 2661 / JAL-1 / JCM 10045 / NBRC 100440) (Methanococcus jannaschii).